Reading from the N-terminus, the 630-residue chain is Probable potassium transport system protein Kup (630 aa).

The next 12 helical transmembrane spans lie at 17–37, 51–71, 105–125, 144–164, 175–195, 218–238, 255–275, 283–303, 344–364, 374–394, 402–422, and 428–448; these read LAIAAIGVVFGDIGTSPLYSL, PSAILGVISLLFWAIILVVGI, ITGLMMALGIFGACMFYGDAV, PQLSHLVLPITIVILIALFWI, LFGPIMLLWFVTIAALGIYHI, VLLAYVVLGSVVLVLTGAEAL, YVLVMPSLVLNYFGQGALLLL, PFFLLAPQWAALPLVVLSTVA, IYVPVVNWLLLFVILCIVIGF, YGIAVTATMVITTILAAVVMV, LLVAMIIGVFLVIDLGFFGAN, and QGGWLPLGIGALLFFLLMTWY.

The protein belongs to the HAK/KUP transporter (TC 2.A.72) family.

Its subcellular location is the cell inner membrane. It catalyses the reaction K(+)(in) + H(+)(in) = K(+)(out) + H(+)(out). In terms of biological role, transport of potassium into the cell. Likely operates as a K(+):H(+) symporter. The sequence is that of Probable potassium transport system protein Kup from Burkholderia mallei (strain NCTC 10247).